A 308-amino-acid chain; its full sequence is Ribonuclease Z (308 aa).

The Zn(2+) site is built by His62, His64, Asp66, His67, His140, Asp211, and His269. Asp66 serves as the catalytic Proton acceptor.

This sequence belongs to the RNase Z family. In terms of assembly, homodimer. Requires Zn(2+) as cofactor.

It catalyses the reaction Endonucleolytic cleavage of RNA, removing extra 3' nucleotides from tRNA precursor, generating 3' termini of tRNAs. A 3'-hydroxy group is left at the tRNA terminus and a 5'-phosphoryl group is left at the trailer molecule.. Its function is as follows. Zinc phosphodiesterase, which displays some tRNA 3'-processing endonuclease activity. Probably involved in tRNA maturation, by removing a 3'-trailer from precursor tRNA. The protein is Ribonuclease Z of Treponema denticola (strain ATCC 35405 / DSM 14222 / CIP 103919 / JCM 8153 / KCTC 15104).